Reading from the N-terminus, the 336-residue chain is Iron-uptake system permease protein FeuC (336 aa).

9 helical membrane-spanning segments follow: residues 7 to 27, 57 to 77, 85 to 105, 120 to 140, 150 to 170, 191 to 211, 246 to 266, 280 to 300, and 308 to 328; these read LFIA…SFSV, VVMA…IQAI, PGIL…MLLF, MPLF…IFAW, IILV…FLSL, ANWT…PILI, VAII…GLIA, YILP…DFAG, and EVPA…YLLF.

Belongs to the binding-protein-dependent transport system permease family. FecCD subfamily. As to quaternary structure, the complex is composed of one ATP-binding protein (YusV), two transmembrane proteins (FeuB and FeuC) and a solute-binding protein (FeuA).

It is found in the cell membrane. Involved in the uptake of iron. Probably responsible for the translocation of the substrate across the membrane. In terms of biological role, part of the ABC transporter complex FeuABC/YusV involved in import of the catecholate siderophores bacillibactin and enterobactin. The protein is Iron-uptake system permease protein FeuC (feuC) of Bacillus subtilis (strain 168).